We begin with the raw amino-acid sequence, 718 residues long: Heat shock 70 kDa protein 7, chloroplastic (718 aa).

The N-terminal 92 residues, M1–V92, are a transit peptide targeting the chloroplast. A compositionally biased stretch (polar residues) spans Q668–Q678. The segment at Q668 to N718 is disordered.

The protein belongs to the heat shock protein 70 (TC 1.A.33) family. DnaK subfamily.

Its subcellular location is the plastid. It localises to the chloroplast stroma. Acts redundantly with HSP70-6 in the thermotolerance of germinating seeds. Plays an important role in the protein precursor import into chloroplasts. Functionally, in cooperation with other chaperones, Hsp70s are key components that facilitate folding of de novo synthesized proteins, assist translocation of precursor proteins into organelles, and are responsible for degradation of damaged protein under stress conditions. This is Heat shock 70 kDa protein 7, chloroplastic (HSP70-7) from Arabidopsis thaliana (Mouse-ear cress).